The chain runs to 343 residues: MKKKWTLEETKMLFKKPFFNLMFQAQEEHRKNFDPNTIQISTLLSIKTGSCPEDCKYCPQSSRYKTGLKKEPLLEIEQILSAAKKAKDSGSSRFCMGAAWKNPKEKDMPYLEEIIKKIKEMGMETCMTLGTLNSTQAKKLADAGLDFYNHNLDTSKNFYNNIITTRTYQERLHTLHAVRSSGMKVCSGGIIGLGEKKQDRIELLMELSNLSIQPESVPINMLVKIPGTPMADNKDVEPFDFIRIIAVARIMMPKSYIRLSAGRHKMNDQTQAMCFMAGANSIFYGCKLLTSDNPEEKHDLELFKKLDLIPENKTQTLLKEDEYKTIIKSSKIKKDQYYNAAII.

In terms of domain architecture, Radical SAM core spans 36–254 (NTIQISTLLS…IAVARIMMPK (219 aa)). [4Fe-4S] cluster contacts are provided by Cys51, Cys55, and Cys58. [2Fe-2S] cluster-binding residues include Cys95, Cys126, Cys186, and Arg258.

The protein belongs to the radical SAM superfamily. Biotin synthase family. As to quaternary structure, homodimer. [4Fe-4S] cluster is required as a cofactor. [2Fe-2S] cluster serves as cofactor.

The catalysed reaction is (4R,5S)-dethiobiotin + (sulfur carrier)-SH + 2 reduced [2Fe-2S]-[ferredoxin] + 2 S-adenosyl-L-methionine = (sulfur carrier)-H + biotin + 2 5'-deoxyadenosine + 2 L-methionine + 2 oxidized [2Fe-2S]-[ferredoxin]. The protein operates within cofactor biosynthesis; biotin biosynthesis; biotin from 7,8-diaminononanoate: step 2/2. Functionally, catalyzes the conversion of dethiobiotin (DTB) to biotin by the insertion of a sulfur atom into dethiobiotin via a radical-based mechanism. The polypeptide is Biotin synthase (Buchnera aphidicola subsp. Acyrthosiphon pisum (strain APS) (Acyrthosiphon pisum symbiotic bacterium)).